We begin with the raw amino-acid sequence, 488 residues long: Cysteine--tRNA ligase (488 aa).

Cysteine 29 contributes to the Zn(2+) binding site. Residues 31 to 41 (ATVQGMPHVGH) carry the 'HIGH' region motif. Zn(2+) contacts are provided by cysteine 227, histidine 252, and glutamate 256. A 'KMSKS' region motif is present at residues 283-287 (KMSKS). Lysine 286 serves as a coordination point for ATP.

Belongs to the class-I aminoacyl-tRNA synthetase family. Monomer. Zn(2+) serves as cofactor.

It is found in the cytoplasm. The enzyme catalyses tRNA(Cys) + L-cysteine + ATP = L-cysteinyl-tRNA(Cys) + AMP + diphosphate. The protein is Cysteine--tRNA ligase of Pseudarthrobacter chlorophenolicus (strain ATCC 700700 / DSM 12829 / CIP 107037 / JCM 12360 / KCTC 9906 / NCIMB 13794 / A6) (Arthrobacter chlorophenolicus).